The sequence spans 262 residues: 14-3-3-like protein GF14-E (262 aa).

Belongs to the 14-3-3 family. As to expression, ubiquitous.

The protein localises to the cytoplasm. It localises to the nucleus. In terms of biological role, is associated with a DNA binding complex that binds to the G box, a well-characterized cis-acting DNA regulatory element found in plant genes. In Oryza sativa subsp. japonica (Rice), this protein is 14-3-3-like protein GF14-E (GF14E).